The following is a 266-amino-acid chain: GFP-like fluorescent chromoprotein cFP484 (266 aa).

The segment at residues 104–106 is a cross-link (2-iminomethyl-5-imidazolinone (Gln-Gly)); that stretch reads QYG. Tyrosine 105 carries the 2,3-didehydrotyrosine modification.

It belongs to the GFP family. In terms of processing, contains a chromophore consisting of modified amino acid residues. The chromophore is formed by autocatalytic backbone condensation between Xaa-N and Gly-(N+2), oxidation of Tyr-(N+1) to didehydrotyrosine, and formation of a double bond to the alpha-amino nitrogen of residue Xaa-N. Maturation of the chromophore requires nothing other than molecular oxygen. The precise stereochemistry of the tyrosine has not been determined. As to expression, tentacle and oral disk.

Pigment protein that is green in color. This chain is GFP-like fluorescent chromoprotein cFP484, found in Clavularia sp. (Brown star polyp).